The chain runs to 367 residues: Lipoyl synthase 2, chloroplastic (367 aa).

Positions 84, 89, 95, 121, 125, 128, and 336 each coordinate [4Fe-4S] cluster. The region spanning 104–325 (GEGDGIATAT…KEYGESVGFR (222 aa)) is the Radical SAM core domain.

Belongs to the radical SAM superfamily. Lipoyl synthase family. Requires [4Fe-4S] cluster as cofactor.

It is found in the plastid. The protein localises to the chloroplast. The catalysed reaction is [[Fe-S] cluster scaffold protein carrying a second [4Fe-4S](2+) cluster] + N(6)-octanoyl-L-lysyl-[protein] + 2 oxidized [2Fe-2S]-[ferredoxin] + 2 S-adenosyl-L-methionine + 4 H(+) = [[Fe-S] cluster scaffold protein] + N(6)-[(R)-dihydrolipoyl]-L-lysyl-[protein] + 4 Fe(3+) + 2 hydrogen sulfide + 2 5'-deoxyadenosine + 2 L-methionine + 2 reduced [2Fe-2S]-[ferredoxin]. It participates in protein modification; protein lipoylation via endogenous pathway; protein N(6)-(lipoyl)lysine from octanoyl-[acyl-carrier-protein]: step 2/2. In terms of biological role, catalyzes the radical-mediated insertion of two sulfur atoms into the C-6 and C-8 positions of the octanoyl moiety bound to the lipoyl domains of lipoate-dependent enzymes, thereby converting the octanoylated domains into lipoylated derivatives. This chain is Lipoyl synthase 2, chloroplastic, found in Zea mays (Maize).